The sequence spans 63 residues: Toxin Tx7335 (63 aa).

Disulfide bonds link Cys-3-Cys-24, Cys-17-Cys-39, Cys-25-Cys-55, and Cys-56-Cys-61.

Post-translationally, contains 4 disulfide bonds. Expressed by the venom gland.

The protein localises to the secreted. Its function is as follows. Activates bacterial pH-gated potassium channel KcsA by binding to its extracellular domain, probably at a site different from channel inhibitors. Increases both mean open time and open probability of KscA. The polypeptide is Toxin Tx7335 (Dendroaspis angusticeps (Eastern green mamba)).